Reading from the N-terminus, the 338-residue chain is Arginine N-succinyltransferase subunit alpha (338 aa).

Belongs to the succinylarginine dihydrolase family. Heterotetramer of two alpha and two beta subunits.

The catalysed reaction is succinyl-CoA + L-arginine = N(2)-succinyl-L-arginine + CoA + H(+). It functions in the pathway amino-acid degradation; L-arginine degradation via AST pathway; L-glutamate and succinate from L-arginine: step 1/5. In terms of biological role, catalyzes the transfer of succinyl-CoA to arginine to produce N(2)-succinylarginine. Also acts on L-ornithine. This Pseudomonas aeruginosa (strain ATCC 15692 / DSM 22644 / CIP 104116 / JCM 14847 / LMG 12228 / 1C / PRS 101 / PAO1) protein is Arginine N-succinyltransferase subunit alpha (astA).